The chain runs to 88 residues: Probable Fe(2+)-trafficking protein (88 aa).

This sequence belongs to the Fe(2+)-trafficking protein family.

Functionally, could be a mediator in iron transactions between iron acquisition and iron-requiring processes, such as synthesis and/or repair of Fe-S clusters in biosynthetic enzymes. This chain is Probable Fe(2+)-trafficking protein, found in Alkalilimnicola ehrlichii (strain ATCC BAA-1101 / DSM 17681 / MLHE-1).